Consider the following 674-residue polypeptide: MPPPAEEFAVDDLDEFESRLDSFLNRFHADDLRRILLPFPDGKLHFPLVIDFAELLEFDPEVAHQLYDYPKDVLELFDAAAQRALDKFDAAARRADKRKAGDETMEKKFVHVRVNTSGSALECPEASPSIGKVRVKHRGTLLTLKGTVIRSGGVKMIEGERKYQCRKCKCRFTVHPELEAGNRITLPASCKSKSAKGCGGANFQLIEDSITCHDYQEIKIQENIQLLGVGSIPRSMPIILMDDLVDIVKAGDDVVVTGRLSAKWSPDIKDVRSNLDPMLIANFVRRTNELKSDLDIPVEIINKFEEFWAASRATPLKGRNSILKGICPQIYGLFTVKLAVALTLIGGVQHVDASGTKVRGEPHMLLVGDPGTGKSQFLKFAAKLSNRSVITTGLGSTSAGLTVTAVKDGGEWMLEAGALVLADGGLCCIDEFDSMREHDRTTIHEAMEQQTISIAKAGLVTTLNTRTTVFGATNPKGQYDPNESLSVNTTLSGPLLSRFDIVLVLLDTKNKKWDKIVSSHILAENTEEKKGKTSDPEVMWTLSMLRRYIHYVKQHFKPVLTKEAERVISSYYQRQRQSGTRNAARTTVRMLESLIRLAQAHARLMFRNDVTKLDAIAAILCIESSMTTSAIVDTAGNALHSNFTENPDQECILKCDSIAYLSKNIKYLTDEISN.

Residues 165-198 form a C4-type zinc finger; sequence CRKCKCRFTVHPELEAGNRITLPASCKSKSAKGC. Residues 318–521 enclose the MCM domain; it reads GRNSILKGIC…KWDKIVSSHI (204 aa). 368-375 is an ATP binding site; it reads GDPGTGKS. The Arginine finger motif lies at 497-500; it reads SRFD.

The protein belongs to the MCM family.

The protein localises to the nucleus. It catalyses the reaction ATP + H2O = ADP + phosphate + H(+). In terms of biological role, probable DNA helicase that may play a role in DNA repair during meiosis. This is Probable DNA helicase MCM9 (MCM9) from Oryza sativa subsp. japonica (Rice).